A 401-amino-acid chain; its full sequence is Glutamyl-tRNA reductase (401 aa).

Residues 45 to 48 (TCNR), serine 101, 106 to 108 (EDQ), and glutamine 112 contribute to the substrate site. Residue cysteine 46 is the Nucleophile of the active site. 177–182 (GYGDVG) contacts NADP(+).

This sequence belongs to the glutamyl-tRNA reductase family. In terms of assembly, homodimer.

The catalysed reaction is (S)-4-amino-5-oxopentanoate + tRNA(Glu) + NADP(+) = L-glutamyl-tRNA(Glu) + NADPH + H(+). It participates in porphyrin-containing compound metabolism; protoporphyrin-IX biosynthesis; 5-aminolevulinate from L-glutamyl-tRNA(Glu): step 1/2. Functionally, catalyzes the NADPH-dependent reduction of glutamyl-tRNA(Glu) to glutamate 1-semialdehyde (GSA). The polypeptide is Glutamyl-tRNA reductase (Clostridium botulinum (strain Alaska E43 / Type E3)).